The primary structure comprises 415 residues: Adipocyte plasma membrane-associated protein (415 aa).

Over 1 to 39 (MNEPEGLRFRRLNRPHIITDETHEPQYKATSTYSGKVFR) the chain is Cytoplasmic. A helical membrane pass occupies residues 40 to 60 (VTLLTMVAFLLLPLLVVVFVL). Over 61–412 (ESPIQPEVFS…RSPYLCKLDL (352 aa)) the chain is Extracellular. Asn-159 carries an N-linked (GlcNAc...) asparagine glycan.

The protein belongs to the strictosidine synthase family.

It is found in the membrane. The polypeptide is Adipocyte plasma membrane-associated protein (apmap) (Danio rerio (Zebrafish)).